The primary structure comprises 1030 residues: Semaphorin-6A (1030 aa).

An N-terminal signal peptide occupies residues 1-18 (MRSEALLLYFTLLHFAGA). At 19 to 649 (GFPEDSEPIS…KGHDQLVPVT (631 aa)) the chain is on the extracellular side. Residues 24-512 (SEPISISHGN…FSTCVIKVPL (489 aa)) enclose the Sema domain. Asparagine 33, asparagine 49, and asparagine 65 each carry an N-linked (GlcNAc...) asparagine glycan. 4 cysteine pairs are disulfide-bonded: cysteine 107/cysteine 117, cysteine 135/cysteine 144, cysteine 258/cysteine 369, and cysteine 283/cysteine 328. Asparagine 282 carries an N-linked (GlcNAc...) asparagine glycan. Asparagine 434 and asparagine 461 each carry an N-linked (GlcNAc...) asparagine glycan. 4 cysteine pairs are disulfide-bonded: cysteine 477-cysteine 506, cysteine 515-cysteine 533, cysteine 521-cysteine 568, and cysteine 525-cysteine 542. Residues 650–670 (LLAIAVILAFVMGAVFSGITV) form a helical membrane-spanning segment. Residues 671–1030 (YCVCDHRRKD…TSMKPNDACT (360 aa)) lie on the Cytoplasmic side of the membrane. At serine 698 the chain carries Phosphoserine. Disordered regions lie at residues 754–778 (ALPT…REWE), 860–897 (SSKS…SLSQ), and 912–1030 (YGVD…DACT). The segment covering 920–936 (YPTNSLTRSHQATTLKR) has biased composition (polar residues). The span at 937 to 952 (NNTNSSNSSHLSRNQS) shows a compositional bias: low complexity. A Phosphoserine modification is found at serine 952. Polar residues-rich tracts occupy residues 970 to 997 (QVHS…SLTR) and 1018 to 1030 (PLST…DACT).

Belongs to the semaphorin family. Active as a homodimer or oligomer. The SEMA6A homodimer interacts with a PLXNA2 homodimer, giving rise to a heterotetramer. Interacts with EVL. In terms of assembly, (Microbial infection) Interacts with P.sordellii toxin TcsL; semaphorins SEMA6A and SEMA6B constitute the major host receptors for TcsL in the vascular endothelium.

It is found in the cell membrane. Cell surface receptor for PLXNA2 that plays an important role in cell-cell signaling. Required for normal granule cell migration in the developing cerebellum. Promotes reorganization of the actin cytoskeleton and plays an important role in axon guidance in the developing central nervous system. Can act as repulsive axon guidance cue. Has repulsive action towards migrating granular neurons. May play a role in channeling sympathetic axons into the sympathetic chains and controlling the temporal sequence of sympathetic target innervation. Functionally, (Microbial infection) Acts as a receptor for P.sordellii toxin TcsL in the in the vascular endothelium. In Homo sapiens (Human), this protein is Semaphorin-6A (SEMA6A).